A 145-amino-acid polypeptide reads, in one-letter code: Ribonuclease H (145 aa).

Positions 1-141 (MQEVELFTDG…VDELANQAMD (141 aa)) constitute an RNase H type-1 domain. Mg(2+)-binding residues include D9, E47, D69, and D133.

This sequence belongs to the RNase H family. In terms of assembly, monomer. It depends on Mg(2+) as a cofactor.

It localises to the cytoplasm. The enzyme catalyses Endonucleolytic cleavage to 5'-phosphomonoester.. Endonuclease that specifically degrades the RNA of RNA-DNA hybrids. This Hydrogenovibrio crunogenus (strain DSM 25203 / XCL-2) (Thiomicrospira crunogena) protein is Ribonuclease H.